An 870-amino-acid chain; its full sequence is Aminopeptidase N (870 aa).

Substrate-binding positions include glutamate 121 and 261–265 (GAMEN). Zn(2+) is bound at residue histidine 297. The Proton acceptor role is filled by glutamate 298. The Zn(2+) site is built by histidine 301 and glutamate 320.

The protein belongs to the peptidase M1 family. Zn(2+) is required as a cofactor.

It is found in the cell inner membrane. The enzyme catalyses Release of an N-terminal amino acid, Xaa-|-Yaa- from a peptide, amide or arylamide. Xaa is preferably Ala, but may be most amino acids including Pro (slow action). When a terminal hydrophobic residue is followed by a prolyl residue, the two may be released as an intact Xaa-Pro dipeptide.. Aminopeptidase N is involved in the degradation of intracellular peptides generated by protein breakdown during normal growth as well as in response to nutrient starvation. In Escherichia coli (strain K12), this protein is Aminopeptidase N (pepN).